A 75-amino-acid polypeptide reads, in one-letter code: Large ribosomal subunit protein bL31 (75 aa).

Belongs to the bacterial ribosomal protein bL31 family. Type A subfamily. In terms of assembly, part of the 50S ribosomal subunit.

Its function is as follows. Binds the 23S rRNA. This is Large ribosomal subunit protein bL31 from Acidiphilium cryptum (strain JF-5).